Here is a 230-residue protein sequence, read N- to C-terminus: Fibronectin type III domain-containing protein 4 (230 aa).

Positions Met1–Ala40 are cleaved as a signal peptide. Residues Asp41–Thr163 are Extracellular-facing. A Fibronectin type-III domain is found at Pro43 to Gly136. Residues Asn48 and Asn143 are each glycosylated (N-linked (GlcNAc...) asparagine). Positions Gly118–Asp156 are disordered. Residues Gly164 to Cys184 form a helical membrane-spanning segment. Topologically, residues Arg185 to Val230 are cytoplasmic. Positions Asn193–Gly205 are enriched in basic and acidic residues. Residues Asn193 to Val230 are disordered.

It is found in the membrane. It localises to the secreted. In terms of biological role, has anti-inflammatory properties. In the colon, acts on macrophages to down-regulate inflammation. May suppress osteoclastogenesis and mature osteoclast resorptive function. In white adipose tissue, decreases local inflammation, via interaction with GPR116. Also required for proper systemic glucose tolerance, specifically sensitizing white adipocytes to insulin and promoting glucose uptake. The insulin sensitizing function in adipose tissue is mediated by interaction with ADGRF5/GPR116 and activation of cAMP signaling. In Bos taurus (Bovine), this protein is Fibronectin type III domain-containing protein 4 (FNDC4).